Here is a 301-residue protein sequence, read N- to C-terminus: Nodulation protein D 3 (301 aa).

Positions 6 to 63 constitute an HTH lysR-type domain; sequence LDLNLLVVLDALLTARNLTAAASSINLSQPAMSAAVARLRNYFNDELFTMSGRERVLT. A DNA-binding region (H-T-H motif) is located at residues 23 to 43; that stretch reads LTAAASSINLSQPAMSAAVAR.

This sequence belongs to the LysR transcriptional regulatory family.

In terms of biological role, nodD regulates the expression of the nodABCFE genes which encode other nodulation proteins. NodD is also a negative regulator of its own expression. Binds flavonoids as inducers. This Mesorhizobium japonicum (strain LMG 29417 / CECT 9101 / MAFF 303099) (Mesorhizobium loti (strain MAFF 303099)) protein is Nodulation protein D 3 (nodD3).